The following is a 618-amino-acid chain: Manganese lipoxygenase (618 aa).

Positions 1–16 are cleaved as a signal peptide; it reads MRSRILAIVFAARHVA. Positions 36 to 45 are enriched in low complexity; it reads SSTTVLPSPT. The tract at residues 36–58 is disordered; sequence SSTTVLPSPTQYTLPNNDPNQGA. Positions 46–58 are enriched in polar residues; that stretch reads QYTLPNNDPNQGA. Residues 47-617 enclose the Lipoxygenase domain; that stretch reads YTLPNNDPNQ…NPAVNPFFLS (571 aa). N-linked (GlcNAc...) asparagine glycans are attached at residues asparagine 60, asparagine 91, asparagine 106, asparagine 116, and asparagine 157. The Mn(2+) site is built by histidine 290, histidine 294, histidine 478, and asparagine 482. Asparagine 513 carries N-linked (GlcNAc...) asparagine glycosylation. Valine 618 is a Mn(2+) binding site.

It belongs to the lipoxygenase family. It depends on Mn(2+) as a cofactor. In terms of processing, N- and O-glycosylated.

The protein localises to the secreted. It catalyses the reaction (9Z,12Z)-octadecadienoate + O2 = (11S)-hydroperoxy-(9Z,12Z)-octadecadienoate. The catalysed reaction is (9Z,12Z)-octadecadienoate + O2 = (13R)-hydroperoxy-(9Z,11E)-octadecadienoate. The enzyme catalyses (9Z,12Z,15Z)-octadecatrienoate + O2 = (11S)-hydroperoxy-(9Z,12Z,15Z)-octadecatrienoate. It carries out the reaction (9Z,12Z,15Z)-octadecatrienoate + O2 = (13R)-hydroperoxy-(9Z,11E,15Z)-octadecatrienoate. Functionally, lipoxygenase that metabolizes linoleic and alpha-linolenic acids to 11S- and 13R-hydroperoxy fatty acids. At the end of lipoxygenation, the intermediate product 11S-HPODE from linoleic acid is then transformed into 13R-HPODE as the final product. It also acts on alpha-linolenic acid producing 11S-HPOTrE and 13R-HPOTrE with subsequent transformation of 11S-HPOTrE to 13R-HPOTrE as the final product. Gamma-linolenic acid is a poor substrate. Oleate and arachidonate are not substrates. This chain is Manganese lipoxygenase, found in Gaeumannomyces tritici (Wheat and barley take-all root rot fungus).